A 353-amino-acid polypeptide reads, in one-letter code: Vomeronasal type-1 receptor 1 (353 aa).

Residues 1–56 (MVGDTLKLLSPLMTRYFFLLFYSTDSSDLNENQHPLDFDEMAFGKVKSGISFLIQT) are Extracellular-facing. A helical transmembrane segment spans residues 57 to 77 (GVGILGNSFLLCFYNLILFTG). Topologically, residues 78 to 84 (HKLRPTD) are cytoplasmic. The chain crosses the membrane as a helical span at residues 85–105 (LILSHLALANSMVLFFKGIPQ). Topologically, residues 106 to 132 (TMAAFGLKYLLNDTGCKFVFYYHRVGT) are extracellular. Asparagine 117 carries an N-linked (GlcNAc...) asparagine glycan. Residues 133–153 (RVSLSTICLLNGFQAIKLNPS) form a helical membrane-spanning segment. At 154–169 (ICRWMEIKIRSPRFID) the chain is on the cytoplasmic side. Residues 170–190 (FCCLLCWVPHVLMNASVLLLV) form a helical membrane-spanning segment. Residues 191–226 (NGPLNSKNSSAKNNYGYCSYKASKRFSSLHAVLYFS) lie on the Extracellular side of the membrane. An N-linked (GlcNAc...) asparagine glycan is attached at asparagine 198. A helical membrane pass occupies residues 227–247 (PDFMSLGFMVWASGSMVFFLY). Over 248-274 (RHKQQVQHNHSNRLSCRPSQETRATRT) the chain is Cytoplasmic. Residues 275–295 (IMVLVSSFFVFYSVHSFLTIW) form a helical membrane-spanning segment. The Extracellular segment spans residues 296 to 303 (TTVVANPG). Residues 304-324 (QWIVNNSVLVASYFPSRSPFV) traverse the membrane as a helical segment. Over 325–353 (LIMSDTRISQFCFACRTRKTLFPNLVVMP) the chain is Cytoplasmic.

Belongs to the G-protein coupled receptor 1 family.

Its subcellular location is the cell membrane. In terms of biological role, putative pheromone receptor. The sequence is that of Vomeronasal type-1 receptor 1 (VN1R1) from Gorilla gorilla gorilla (Western lowland gorilla).